The sequence spans 641 residues: MPVITLPDGSHRSFAEPVTVHDVAADIGAGLAKAALAGKVNGKLVDTSHLIENDTELAIVTERDEDGVDIIRHSTAHLMAMAVQELFPGAQVTIGPVIENGFYYDFKYERPFTNEDMARIEKRMEELAKQDLPVSRSIMSRDEAIKLFNEMGEEYKVRIIEDIPGEEDLSFYRQGDFIDLCRGPHVPSTGKLKAFKLTKVAGAYWRGDTSNEQLQRIYGTAWGNKKDLKAYLHRLEEAEKRDHRKIGKKLGLFHMQEEAPGMVFWHPDGWSLYQEVEQYMRAQQHKHGYKEIKTPQVVSRTLWEKSGHWDKFKDDMFTTESEKHDYAIKPMNCPCHVQVFNQGLKSYKDLPLRLAEFGSCHRNEASGALHGLMRVRGFTQDDAHIFCEEDAIQEEVSAFIAMLHEIYADFGFSEILYKLSTRPEKRVGSDEVWDKSEAALEQALNREGVDWELLPGEGAFYGPKIEFSLKDCLGRVWQCGTIQVDFSMPGRLGAQYVADNSERKTPVMLHRAVLGSFERFIGILIEEYEGAFPTWLAPTQVAVLNITDKQRDYCQNLAKKLDSSGYRVNADLRNEKIGFKIREHTLNKVPYLVVVGDKEIENNAVAVRTRKGEDLGTMSVDDFEKLLAADVERKGRTKTEI.

In terms of domain architecture, TGS spans 1 to 61 (MPVITLPDGS…ENDTELAIVT (61 aa)). The segment at 242–533 (DHRKIGKKLG…LIEEYEGAFP (292 aa)) is catalytic. Cys333, His384, and His510 together coordinate Zn(2+).

The protein belongs to the class-II aminoacyl-tRNA synthetase family. As to quaternary structure, homodimer. Requires Zn(2+) as cofactor.

It localises to the cytoplasm. It catalyses the reaction tRNA(Thr) + L-threonine + ATP = L-threonyl-tRNA(Thr) + AMP + diphosphate + H(+). In terms of biological role, catalyzes the attachment of threonine to tRNA(Thr) in a two-step reaction: L-threonine is first activated by ATP to form Thr-AMP and then transferred to the acceptor end of tRNA(Thr). Also edits incorrectly charged L-seryl-tRNA(Thr). This is Threonine--tRNA ligase from Marinobacter nauticus (strain ATCC 700491 / DSM 11845 / VT8) (Marinobacter aquaeolei).